Here is a 251-residue protein sequence, read N- to C-terminus: Flap endonuclease Xni (251 aa).

A Mg(2+)-binding site is contributed by Asp104. The 5'-3' exonuclease domain maps to 160–249 (VQPQQLPDYW…IDGNLQQLRL (90 aa)). 5 residues coordinate K(+): Leu171, Ala172, Pro180, Val182, and Ile185. Positions 184-189 (GIGPKS) are interaction with DNA.

The protein belongs to the Xni family. Requires Mg(2+) as cofactor. The cofactor is K(+).

Has flap endonuclease activity. During DNA replication, flap endonucleases cleave the 5'-overhanging flap structure that is generated by displacement synthesis when DNA polymerase encounters the 5'-end of a downstream Okazaki fragment. This is Flap endonuclease Xni from Escherichia coli O81 (strain ED1a).